The sequence spans 1218 residues: NACHT, LRR and PYD domains-containing protein 1a allele 4 (1218 aa).

Residues 1–29 (MGESQSKQESNTRVAQHGSQQDVDPTFQT) show a composition bias toward polar residues. Disordered stretches follow at residues 1-44 (MGES…QVEQ) and 71-91 (EMDH…DRSE). Residues 77–87 (RRHSHQSKKKL) are compositionally biased toward basic residues. An NACHT domain is found at 175–484 (QLVIIEGAAG…EFFAAMSYIL (310 aa)). 181-188 (GAAGIGKS) serves as a coordination point for ATP. LRR repeat units follow at residues 343-364 (KERN…LTLC), 673-693 (NLEE…RSLC), and 730-750 (RLAE…RQLC). Positions 799–815 (TMPTENTDGEESLTSSK) are enriched in polar residues. The tract at residues 799 to 842 (TMPTENTDGEESLTSSKQQQQQSGDKHMEPLGTDDDFWGPSGPV) is disordered. The interval 835–968 (FWGPSGPVST…HFAVLENPSF (134 aa)) is ZU5. In terms of domain architecture, FIIND spans 835–1118 (FWGPSGPVST…LRPALPRMAS (284 aa)). Residues 969 to 1118 (SPMGVLLRMI…LRPALPRMAS (150 aa)) form a UPA region. The 90-residue stretch at 1122-1211 (DAPALLHFVD…HLIMDLLEKS (90 aa)) folds into the CARD domain.

The protein belongs to the NLRP family. As to quaternary structure, interacts (via LRR repeats) with BCL2 and BCL2L1 (via the loop between motifs BH4 and BH3). Interacts with NOD2; this interaction is enhanced in the presence of muramyl dipeptide (MDP) and increases IL1B release. Interacts with EIF2AK2/PKR; this interaction requires EIF2AK2 activity, is accompanied by EIF2AK2 autophosphorylation and promotes inflammasome assembly in response to danger-associated signals. Interacts with MEFV; this interaction targets Nlrp1a to degradation by autophagy, hence preventing excessive IL1B- and IL18-mediated inflammation. Interacts with DPP9; leading to inhibit activation of the inflammasome. DPP9 acts via formation of a ternary complex, composed of a DPP9 homodimer, one full-length NLRP1 protein, and one cleaved C-terminus of Nlrp1a (NACHT, LRR and PYD domains-containing protein 1a, C-terminus). Interacts with DPP8; leading to inhibit activation of the inflammasome, probably via formation of a ternary complex with DPP8. In terms of assembly, interacts with the C-terminal part of Nlrp1a (NACHT, LRR and PYD domains-containing protein 1a, C-terminus) in absence of pathogens and other damage-associated signals. Interacts with the N-terminal part of Nlrp1a (NACHT, LRR and PYD domains-containing protein 1a, N-terminus) in absence of pathogens and other damage-associated signals. Homomultimer; forms the Nlrp1a inflammasome polymeric complex, a filament composed of homopolymers of this form in response to pathogens and other damage-associated signals. The Nlrp1a inflammasome polymeric complex directly recruits pro-caspase-1 (proCASP1) independently of PYCARD/ASC. Interacts (via CARD domain) with CASP1 (via CARD domain); leading to CASP1 activation. Post-translationally, autocatalytically cleaved. Autocatalytic cleavage in FIIND region occurs constitutively, prior to activation signals, and is required for inflammasome activity (IL1B release), possibly by facilitating CASP1 binding. Both N- and C-terminal parts remain associated non-covalently. In terms of processing, ubiquitinated in response to pathogen-associated signals, leading to its degradation by the proteasome and subsequent release of the cleaved C-terminal part of the protein (NACHT, LRR and PYD domains-containing protein 1a, C-terminus), which polymerizes and forms the Nlrp1a inflammasome.

The protein resides in the cytoplasm. It localises to the cytosol. Its subcellular location is the nucleus. The protein localises to the inflammasome. With respect to regulation, activated by pathogens and other damage-associated signals: activation promotes ubiquitination and degradation of the N-terminal part, releasing the cleaved C-terminal part of the protein (NACHT, LRR and PYD domains-containing protein 1a, C-terminus), which polymerizes and forms the Nlrp1a inflammasome. Nlrp1a inflammasome is inhibited by DPP8 and DPP9, which sequester the C-terminal fragment of Nlrp1a (NACHT, LRR and PYD domains-containing protein 1a, C-terminus) in a ternary complex, thereby preventing Nlrp1a oligomerization and activation. Nlrp1a inflammasome is strongly activated by Val-boroPro (Talabostat, PT-100), an inhibitor of dipeptidyl peptidases DPP8 and DPP9. Val-boroPro relieves inhibition of DPP8 and/or DPP9 by promoting disruption of the ternary complex, releasing its C-terminal part from autoinhibition. Not activated by cleavage by B.anthracis lethal toxin (LT) endopeptidase. Acts as the sensor component of the Nlrp1a inflammasome, which mediates inflammasome activation in response to various pathogen-associated signals, leading to subsequent pyroptosis. Inflammasomes are supramolecular complexes that assemble in the cytosol in response to pathogens and other damage-associated signals and play critical roles in innate immunity and inflammation. Acts as a recognition receptor (PRR): recognizes specific pathogens and other damage-associated signals, such as Val-boroPro inhibitor, and mediates the formation of the inflammasome polymeric complex. In response to pathogen-associated signals, the N-terminal part of Nlrp1a is degraded by the proteasome, releasing the cleaved C-terminal part of the protein (NACHT, LRR and PYD domains-containing protein 1a, C-terminus), which polymerizes to initiate the formation of the inflammasome complex: the inflammasome directly recruits pro-caspase-1 (proCASP1) independently of PYCARD/ASC and promotes caspase-1 (CASP1) activation, which subsequently cleaves and activates inflammatory cytokines IL1B and IL18 and gasdermin-D (GSDMD), leading to pyroptosis. In the absence of GSDMD expression, the Nlrp1a inflammasome is able to recruit and activate CASP8, leading to activation of gasdermin-E (GSDME). In terms of biological role, constitutes the precursor of the Nlrp1a inflammasome, which mediates autoproteolytic processing within the FIIND domain to generate the N-terminal and C-terminal parts, which are associated non-covalently in absence of pathogens and other damage-associated signals. Functionally, regulatory part that prevents formation of the Nlrp1a inflammasome: in absence of pathogens and other damage-associated signals, interacts with the C-terminal part of Nlrp1a (NACHT, LRR and PYD domains-containing protein 1a, C-terminus), preventing activation of the Nlrp1a inflammasome. In response to pathogen-associated signals, this part is ubiquitinated by the N-end rule pathway and degraded by the proteasome, releasing the cleaved C-terminal part of the protein, which polymerizes and forms the Nlrp1a inflammasome. Its function is as follows. Constitutes the active part of the Nlrp1a inflammasome. In absence of pathogens and other damage-associated signals, interacts with the N-terminal part of Nlrp1a (NACHT, LRR and PYD domains-containing protein 1a, N-terminus), preventing activation of the Nlrp1a inflammasome. In response to pathogen-associated signals, the N-terminal part of Nlrp1a is degraded by the proteasome, releasing this form, which polymerizes to form the Nlrp1a inflammasome complex: the Nlrp1a inflammasome complex then directly recruits pro-caspase-1 (proCASP1) and promotes caspase-1 (CASP1) activation, leading to gasdermin-D (GSDMD) cleavage and subsequent pyroptosis. The chain is NACHT, LRR and PYD domains-containing protein 1a allele 4 from Rattus norvegicus (Rat).